The primary structure comprises 545 residues: E3 ubiquitin-protein ligase ipaH9.8 (545 aa).

Residues methionine 1 to methionine 242 are interaction with target proteins. 8 LRR repeats span residues asparagine 57–alanine 77, glutamine 78–leucine 99, lysine 100–proline 117, alanine 118–leucine 139, leucine 140–glutamine 157, alanine 158–asparagine 179, valine 182–leucine 203, and asparagine 205–threonine 228. The tract at residues serine 243–leucine 250 is linker. The E3 ubiquitin-protein ligase catalytic domain stretch occupies residues histidine 251–serine 545. Positions proline 253–serine 545 constitute an NEL domain. Catalysis depends on cysteine 337, which acts as the Glycyl thioester intermediate.

It belongs to the LRR-containing bacterial E3 ligase family. In terms of assembly, also interacts with human and mouse U2AF1 (U2AF35). Autoubiquitinated (in vitro). Ubiquitinated in the presence of host E1 ubiquitin-activating enzyme, E2 ubiquitin-conjugating enzyme and ubiquitin.

Its subcellular location is the secreted. The protein localises to the host cytoplasm. The protein resides in the host nucleus. It carries out the reaction S-ubiquitinyl-[E2 ubiquitin-conjugating enzyme]-L-cysteine + [acceptor protein]-L-lysine = [E2 ubiquitin-conjugating enzyme]-L-cysteine + N(6)-ubiquitinyl-[acceptor protein]-L-lysine.. It participates in protein modification; protein ubiquitination. Its activity is regulated as follows. Exists in an autoinhibited state in the absence of substrate protein, due to interactions of the leucine-rich repeats with NEL domain. Is activated upon binding to a substrate protein. Its function is as follows. Effector E3 ubiquitin ligase that interferes with host's ubiquitination pathway and modulates the acute inflammatory responses, thus facilitating bacterial colonization within the host cell. Interacts with IKBKG (NEMO) and TNIP1 (ABIN-1), a ubiquitin-binding adapter protein, which results in TNIP1-dependent 'Lys-27'-linked polyubiquitination of IKBKG. Consequently, polyubiquitinated IKBKG undergoes proteasome-dependent degradation, which perturbs NF-kappa-B activation during bacterial infection. Mediates polyubiquitination of host U2AF1, leading to its proteasomal degradation. Catalyzes 'Lys-48'-linked polyubiquitination and subsequent degradation of a subset of host guanylate-binding proteins (GBP1, GBP2, GBP4 and GBP6), thereby suppressing host cell defense. In contrast, host GBP3 and GBP7 are not ubiquitinated by IpaH9.8. Uses UBE2D2 (UBCH5B) as an E2 ubiquitin-conjugating enzyme. This chain is E3 ubiquitin-protein ligase ipaH9.8, found in Shigella flexneri.